Here is a 147-residue protein sequence, read N- to C-terminus: Ribonuclease VapC43 (147 aa).

One can recognise a PINc domain in the interval Cys-3–His-139. The Mg(2+) site is built by Asp-5 and Asp-108.

It belongs to the PINc/VapC protein family. Mg(2+) serves as cofactor.

In terms of biological role, toxic component of a type II toxin-antitoxin (TA) system. An RNase. Its toxic effect is neutralized by coexpression with cognate antitoxin VapB43. This Mycobacterium tuberculosis (strain CDC 1551 / Oshkosh) protein is Ribonuclease VapC43.